The chain runs to 138 residues: Venom allergen 2 (138 aa).

The signal sequence occupies residues 1–19 (MKSFVLATCLLGFAQIIYA). Disulfide bonds link Cys34-Cys57, Cys81-Cys94, and Cys101-Cys122.

The protein belongs to the ant venom allergen 2/4 family. As to quaternary structure, homodimer; disulfide-linked. As to expression, expressed by the venom gland.

It localises to the secreted. The protein is Venom allergen 2 of Solenopsis invicta (Red imported fire ant).